The chain runs to 338 residues: tRNA N6-adenosine threonylcarbamoyltransferase (338 aa).

His114 and His118 together coordinate Fe cation. Substrate-binding positions include 137-141 (IVSGG), Asp170, Gly183, Asp187, and Asn277. Asp305 is a Fe cation binding site.

It belongs to the KAE1 / TsaD family. Fe(2+) serves as cofactor.

The protein resides in the cytoplasm. It catalyses the reaction L-threonylcarbamoyladenylate + adenosine(37) in tRNA = N(6)-L-threonylcarbamoyladenosine(37) in tRNA + AMP + H(+). In terms of biological role, required for the formation of a threonylcarbamoyl group on adenosine at position 37 (t(6)A37) in tRNAs that read codons beginning with adenine. Is involved in the transfer of the threonylcarbamoyl moiety of threonylcarbamoyl-AMP (TC-AMP) to the N6 group of A37, together with TsaE and TsaB. TsaD likely plays a direct catalytic role in this reaction. This Clostridioides difficile (strain 630) (Peptoclostridium difficile) protein is tRNA N6-adenosine threonylcarbamoyltransferase.